Reading from the N-terminus, the 367-residue chain is Inactive serine protease 39 (367 aa).

The N-terminal stretch at 1-31 is a signal peptide; that stretch reads MWGSRAQQSGPDRGGACLLAAFLLCFSLLHA. The Peptidase S1 domain maps to 68–312; sequence IYGGQIAKAE…FSDWIKQKKA (245 aa). Cystine bridges form between Cys-93–Cys-109, Cys-192–Cys-269, Cys-225–Cys-248, and Cys-259–Cys-287.

It belongs to the peptidase S1 family. As to expression, expressed in testis. More specifically, abundantly expressed in the haploid round spermatid.

The protein localises to the cytoplasmic vesicle. Its subcellular location is the secretory vesicle. The protein resides in the acrosome. It localises to the secreted. In terms of biological role, may play an important role in the sperm/egg interaction; released during the acrosome reaction. This Mus musculus (Mouse) protein is Inactive serine protease 39 (Prss39).